The chain runs to 618 residues: Proline--tRNA ligase (618 aa).

The protein belongs to the class-II aminoacyl-tRNA synthetase family. ProS type 1 subfamily. As to quaternary structure, homodimer.

Its subcellular location is the cytoplasm. The enzyme catalyses tRNA(Pro) + L-proline + ATP = L-prolyl-tRNA(Pro) + AMP + diphosphate. Its function is as follows. Catalyzes the attachment of proline to tRNA(Pro) in a two-step reaction: proline is first activated by ATP to form Pro-AMP and then transferred to the acceptor end of tRNA(Pro). As ProRS can inadvertently accommodate and process non-cognate amino acids such as alanine and cysteine, to avoid such errors it has two additional distinct editing activities against alanine. One activity is designated as 'pretransfer' editing and involves the tRNA(Pro)-independent hydrolysis of activated Ala-AMP. The other activity is designated 'posttransfer' editing and involves deacylation of mischarged Ala-tRNA(Pro). The misacylated Cys-tRNA(Pro) is not edited by ProRS. The sequence is that of Proline--tRNA ligase from Streptococcus pyogenes serotype M18 (strain MGAS8232).